The chain runs to 243 residues: 7-carboxy-7-deazaguanine synthase (243 aa).

Substrate is bound by residues 15–17 (IQG) and R30. A Radical SAM core domain is found at 21–239 (VIGQKTMFVR…PQLHTLLWGN (219 aa)). C34, C38, and C41 together coordinate [4Fe-4S] cluster. Residue S43 coordinates Mg(2+). S81 contributes to the substrate binding site. S-adenosyl-L-methionine is bound by residues G83 and 127–129 (SPK).

This sequence belongs to the radical SAM superfamily. 7-carboxy-7-deazaguanine synthase family. As to quaternary structure, homodimer. [4Fe-4S] cluster serves as cofactor. It depends on S-adenosyl-L-methionine as a cofactor. Requires Mg(2+) as cofactor.

The enzyme catalyses 6-carboxy-5,6,7,8-tetrahydropterin + H(+) = 7-carboxy-7-deazaguanine + NH4(+). It functions in the pathway purine metabolism; 7-cyano-7-deazaguanine biosynthesis. Catalyzes the complex heterocyclic radical-mediated conversion of 6-carboxy-5,6,7,8-tetrahydropterin (CPH4) to 7-carboxy-7-deazaguanine (CDG), a step common to the biosynthetic pathways of all 7-deazapurine-containing compounds. The polypeptide is 7-carboxy-7-deazaguanine synthase (Bacillus subtilis (strain 168)).